A 113-amino-acid polypeptide reads, in one-letter code: UPF0482 protein YnfB (113 aa).

The signal sequence occupies residues 1–28 (MKITLSKRIGLLAFLLPCALALSTTVHA).

This sequence belongs to the UPF0482 family.

The sequence is that of UPF0482 protein YnfB from Shigella flexneri serotype 5b (strain 8401).